The chain runs to 447 residues: GTPase Der (447 aa).

2 consecutive EngA-type G domains span residues 4–165 and 180–357; these read KIIT…SVEE and LQIV…KIWN. GTP-binding positions include 10–17, 57–61, 119–122, 186–193, 233–237, and 298–301; these read GRPNVGKS, DTPGL, NKCE, GRPNAGKS, DTAGL, and NKWD. A KH-like domain is found at 358-443; it reads KKITTNKLNK…PIRFTYVKNK (86 aa).

This sequence belongs to the TRAFAC class TrmE-Era-EngA-EngB-Septin-like GTPase superfamily. EngA (Der) GTPase family. Associates with the 50S ribosomal subunit.

Its function is as follows. GTPase that plays an essential role in the late steps of ribosome biogenesis. In Rickettsia prowazekii (strain Madrid E), this protein is GTPase Der.